Reading from the N-terminus, the 1370-residue chain is DNA-directed RNA polymerase subunit beta (1370 aa).

It belongs to the RNA polymerase beta chain family. As to quaternary structure, the RNAP catalytic core consists of 2 alpha, 1 beta, 1 beta' and 1 omega subunit. When a sigma factor is associated with the core the holoenzyme is formed, which can initiate transcription.

It carries out the reaction RNA(n) + a ribonucleoside 5'-triphosphate = RNA(n+1) + diphosphate. DNA-dependent RNA polymerase catalyzes the transcription of DNA into RNA using the four ribonucleoside triphosphates as substrates. This chain is DNA-directed RNA polymerase subunit beta, found in Bordetella avium (strain 197N).